The primary structure comprises 459 residues: Argininosuccinate lyase (459 aa).

It belongs to the lyase 1 family. Argininosuccinate lyase subfamily.

It is found in the cytoplasm. It carries out the reaction 2-(N(omega)-L-arginino)succinate = fumarate + L-arginine. It functions in the pathway amino-acid biosynthesis; L-arginine biosynthesis; L-arginine from L-ornithine and carbamoyl phosphate: step 3/3. This Desulforudis audaxviator (strain MP104C) protein is Argininosuccinate lyase.